Consider the following 222-residue polypeptide: Thiopurine S-methyltransferase (222 aa).

W10, L45, E66, and R124 together coordinate S-adenosyl-L-methionine.

Belongs to the class I-like SAM-binding methyltransferase superfamily. TPMT family.

Its subcellular location is the cytoplasm. The catalysed reaction is S-adenosyl-L-methionine + a thiopurine = S-adenosyl-L-homocysteine + a thiopurine S-methylether.. The sequence is that of Thiopurine S-methyltransferase from Methylococcus capsulatus (strain ATCC 33009 / NCIMB 11132 / Bath).